We begin with the raw amino-acid sequence, 893 residues long: Probable ion channel CASTOR (893 aa).

The segment at 1–94 (MPLDPDSSPA…APRRRDPRYA (94 aa)) is disordered. Residues 65-85 (PLPPPEQQKQQQPPPTTPPPA) are compositionally biased toward pro residues. The helical transmembrane segment at 132-152 (TLRWSGMVSVAAIVLCFSSLV) threads the bilayer. Positions 156–178 (SSLHDQVHHLKAQLAEATTKLQS) form a coiled coil. A run of 3 helical transmembrane segments spans residues 210-230 (LLLS…MDLF), 266-286 (LVLL…LYGV), and 318-338 (LVSV…LGLV). RCK N-terminal domains follow at residues 359–500 (QSHT…ETVV) and 619–792 (PERI…DYVL). The stretch at 389-415 (TIVVMAEKDKEEMEADIAKMEFDLKGT) forms a coiled coil.

The protein belongs to the castor/pollux (TC 1.A.1.23) family. Expressed in roots, leaves, stems and panicles.

It localises to the nucleus membrane. Its function is as follows. Required for mycorrhizal symbiosis. The polypeptide is Probable ion channel CASTOR (Oryza sativa subsp. japonica (Rice)).